A 266-amino-acid chain; its full sequence is Hydroxyethylthiazole kinase (266 aa).

Met43 provides a ligand contact to substrate. Arg119 and Thr166 together coordinate ATP. Gly193 provides a ligand contact to substrate.

The protein belongs to the Thz kinase family. The cofactor is Mg(2+).

The enzyme catalyses 5-(2-hydroxyethyl)-4-methylthiazole + ATP = 4-methyl-5-(2-phosphooxyethyl)-thiazole + ADP + H(+). Its pathway is cofactor biosynthesis; thiamine diphosphate biosynthesis; 4-methyl-5-(2-phosphoethyl)-thiazole from 5-(2-hydroxyethyl)-4-methylthiazole: step 1/1. In terms of biological role, catalyzes the phosphorylation of the hydroxyl group of 4-methyl-5-beta-hydroxyethylthiazole (THZ). In Methanococcus vannielii (strain ATCC 35089 / DSM 1224 / JCM 13029 / OCM 148 / SB), this protein is Hydroxyethylthiazole kinase.